Consider the following 249-residue polypeptide: Coproheme decarboxylase (249 aa).

Fe-coproporphyrin III-binding positions include Arg131, Tyr145–Lys149, His172, Gln185, and Ser223. The active site involves Tyr145.

The protein belongs to the ChdC family. Type 1 subfamily. It depends on Fe-coproporphyrin III as a cofactor.

The enzyme catalyses Fe-coproporphyrin III + 2 H2O2 + 2 H(+) = heme b + 2 CO2 + 4 H2O. It carries out the reaction Fe-coproporphyrin III + H2O2 + H(+) = harderoheme III + CO2 + 2 H2O. It catalyses the reaction harderoheme III + H2O2 + H(+) = heme b + CO2 + 2 H2O. Its pathway is porphyrin-containing compound metabolism; protoheme biosynthesis. In terms of biological role, involved in coproporphyrin-dependent heme b biosynthesis. Catalyzes the decarboxylation of Fe-coproporphyrin III (coproheme) to heme b (protoheme IX), the last step of the pathway. The reaction occurs in a stepwise manner with a three-propionate intermediate. The polypeptide is Coproheme decarboxylase (Halalkalibacterium halodurans (strain ATCC BAA-125 / DSM 18197 / FERM 7344 / JCM 9153 / C-125) (Bacillus halodurans)).